A 776-amino-acid chain; its full sequence is Transcriptional regulator QRICH1 (776 aa).

Methionine 1 bears the N-acetylmethionine mark. The 43-residue stretch at glutamate 6–threonine 48 folds into the CARD domain. 2 disordered regions span residues isoleucine 139–leucine 164 and alanine 218–serine 240. A Phosphoserine modification is found at serine 345. Glycyl lysine isopeptide (Lys-Gly) (interchain with G-Cter in SUMO2) cross-links involve residues lysine 353 and lysine 358. Residues glutamine 419–glutamate 429 show a composition bias toward low complexity. The interval glutamine 419–leucine 441 is disordered. Phosphoserine is present on serine 464.

The protein resides in the nucleus. It localises to the cytoplasm. The protein localises to the cell membrane. Transcriptional regulator that acts as a mediator of the integrated stress response (ISR) through transcriptional control of protein homeostasis under conditions of ER stress. Controls the outcome of the unfolded protein response (UPR) which is an ER-stress response pathway. ER stress induces QRICH1 translation by a ribosome translation re-initiation mechanism in response to EIF2S1/eIF-2-alpha phosphorylation, and stress-induced QRICH1 regulates a transcriptional program associated with protein translation, protein secretion-mediated proteotoxicity and cell death during the terminal UPR. May cooperate with ATF4 transcription factor signaling to regulate ER homeostasis which is critical for cell viability. Up-regulates CASP3/caspase-3 activity in epithelial cells under ER stress. Central regulator of proteotoxicity associated with ER stress-mediated inflammatory diseases in the intestines and liver. Involved in chondrocyte hypertrophy, a process required for normal longitudinal bone growth. The chain is Transcriptional regulator QRICH1 from Homo sapiens (Human).